A 259-amino-acid chain; its full sequence is MTTPFTVIIPARYASHRFPGKPLASLLGWPMIHHVCRRAEESGAARILVATDHREIAHACREEGREVVMTRHDHPSGTDRLAEVAERLGLDDDQIVVNLQGDEPLMPGRLVRQVALDLAAHRDAGIATLATLCHSLDEVRSPHAVKVVRDRQGYALYFSRAPIPWDRDGFSGAAGAARSPGQWLRHLGLYAYRVGFLRRYPALEAAPPEGLEALEQLRALWHGVRIHVGLAHQVPGPGVDTPQDLAQVERLLAEQGPPA.

It belongs to the KdsB family.

The protein localises to the cytoplasm. It carries out the reaction 3-deoxy-alpha-D-manno-oct-2-ulosonate + CTP = CMP-3-deoxy-beta-D-manno-octulosonate + diphosphate. The protein operates within nucleotide-sugar biosynthesis; CMP-3-deoxy-D-manno-octulosonate biosynthesis; CMP-3-deoxy-D-manno-octulosonate from 3-deoxy-D-manno-octulosonate and CTP: step 1/1. Its pathway is bacterial outer membrane biogenesis; lipopolysaccharide biosynthesis. In terms of biological role, activates KDO (a required 8-carbon sugar) for incorporation into bacterial lipopolysaccharide in Gram-negative bacteria. The protein is 3-deoxy-manno-octulosonate cytidylyltransferase of Alkalilimnicola ehrlichii (strain ATCC BAA-1101 / DSM 17681 / MLHE-1).